The sequence spans 457 residues: Transcription factor PCF7 (457 aa).

Residues 58–84 are a coiled coil; sequence STLHYLLQEKERAQQAHEQLQIYQQQQ. Residues 95 to 121 form a disordered region; the sequence is RQPASRGPGGGGGGGDGGGSSGESTPV. Residues 101 to 115 show a composition bias toward gly residues; sequence GPGGGGGGGDGGGSS. One can recognise a TCP domain in the interval 140–198; the sequence is RKDRHSKVCTARGLRDRRVRLAAHTAIRFYDVQDRLGYDRPSKAVDWLMRNAKAAIDEL. Disordered regions lie at residues 199 to 231 and 263 to 299; these read PDRAEAPPPPAAASTEQPEGTEQANSTSYGFGN and KSLFPSSSTASGAASAGHDEYRGSPPDLLSRTTSNQQ. The span at 212 to 230 shows a compositional bias: polar residues; it reads STEQPEGTEQANSTSYGFG. A compositionally biased stretch (low complexity) spans 268–278; the sequence is SSSTASGAASA.

Forms homodimers and heterodimers.

Its subcellular location is the nucleus. In terms of biological role, transcription activator. Binds the promoter core sequence 5'-GGNCC-3'. This is Transcription factor PCF7 (PCF7) from Oryza sativa subsp. indica (Rice).